Reading from the N-terminus, the 240-residue chain is Glutathione S-transferase U9 (240 aa).

In terms of domain architecture, GST N-terminal spans 7-86; it reads NKVILHGSFA…YIDETWSNGP (80 aa). Residues 17–18, 43–44, 57–58, and 70–71 each bind glutathione; these read SP, NK, KI, and ES. Positions 92–226 constitute a GST C-terminal domain; it reads DPYRRSKVRF…EQILEILRAF (135 aa). T161 carries the post-translational modification Phosphothreonine.

It belongs to the GST superfamily. Tau family.

It localises to the cytoplasm. The protein resides in the cytosol. It carries out the reaction RX + glutathione = an S-substituted glutathione + a halide anion + H(+). In terms of biological role, may be involved in the conjugation of reduced glutathione to a wide number of exogenous and endogenous hydrophobic electrophiles and have a detoxification role against certain herbicides. This chain is Glutathione S-transferase U9 (GSTU9), found in Arabidopsis thaliana (Mouse-ear cress).